The sequence spans 284 residues: 2-dehydro-3-deoxyphosphooctonate aldolase (284 aa).

This sequence belongs to the KdsA family.

Its subcellular location is the cytoplasm. It catalyses the reaction D-arabinose 5-phosphate + phosphoenolpyruvate + H2O = 3-deoxy-alpha-D-manno-2-octulosonate-8-phosphate + phosphate. It functions in the pathway carbohydrate biosynthesis; 3-deoxy-D-manno-octulosonate biosynthesis; 3-deoxy-D-manno-octulosonate from D-ribulose 5-phosphate: step 2/3. The protein operates within bacterial outer membrane biogenesis; lipopolysaccharide biosynthesis. The protein is 2-dehydro-3-deoxyphosphooctonate aldolase of Paraburkholderia xenovorans (strain LB400).